A 336-amino-acid chain; its full sequence is Fructose-1,6-bisphosphatase class 1 (336 aa).

Residues glutamate 98, aspartate 117, leucine 119, and aspartate 120 each contribute to the Mg(2+) site. Substrate contacts are provided by residues 120–123 (DGSS), asparagine 210, and lysine 276. Glutamate 282 lines the Mg(2+) pocket.

Belongs to the FBPase class 1 family. As to quaternary structure, homotetramer. It depends on Mg(2+) as a cofactor.

It localises to the cytoplasm. The catalysed reaction is beta-D-fructose 1,6-bisphosphate + H2O = beta-D-fructose 6-phosphate + phosphate. Its pathway is carbohydrate biosynthesis; gluconeogenesis. This Caulobacter vibrioides (strain ATCC 19089 / CIP 103742 / CB 15) (Caulobacter crescentus) protein is Fructose-1,6-bisphosphatase class 1.